The chain runs to 736 residues: Elongation factor 2 (736 aa).

The 245-residue stretch at 18–262 (TRVRNIGIIA…AVIKFVPNPV (245 aa)) folds into the tr-type G domain. Residues 27-34 (AHVDHGKT), 93-97 (DTPGH), and 147-150 (NKVD) each bind GTP. His-603 bears the Diphthamide mark.

Belongs to the TRAFAC class translation factor GTPase superfamily. Classic translation factor GTPase family. EF-G/EF-2 subfamily.

It is found in the cytoplasm. Catalyzes the GTP-dependent ribosomal translocation step during translation elongation. During this step, the ribosome changes from the pre-translocational (PRE) to the post-translocational (POST) state as the newly formed A-site-bound peptidyl-tRNA and P-site-bound deacylated tRNA move to the P and E sites, respectively. Catalyzes the coordinated movement of the two tRNA molecules, the mRNA and conformational changes in the ribosome. This is Elongation factor 2 from Metallosphaera sedula (strain ATCC 51363 / DSM 5348 / JCM 9185 / NBRC 15509 / TH2).